The following is a 445-amino-acid chain: Proline--tRNA ligase (445 aa).

Belongs to the class-II aminoacyl-tRNA synthetase family. ProS type 2 subfamily. In terms of assembly, homodimer.

It is found in the cytoplasm. It catalyses the reaction tRNA(Pro) + L-proline + ATP = L-prolyl-tRNA(Pro) + AMP + diphosphate. Functionally, catalyzes the attachment of proline to tRNA(Pro) in a two-step reaction: proline is first activated by ATP to form Pro-AMP and then transferred to the acceptor end of tRNA(Pro). This is Proline--tRNA ligase from Caulobacter sp. (strain K31).